A 369-amino-acid chain; its full sequence is Delta(12)-oleate desaturase (369 aa).

The next 2 membrane-spanning stretches (helical) occupy residues 41–61 (LLSD…YFPL) and 69–89 (IAWP…WVIA). Positions 90-94 (HECGH) match the Histidine box-1 motif. The chain crosses the membrane as a helical span at residues 102 to 122 (LIDDIVGLFFHSALLVPYFSW). The Histidine box-2 motif lies at 126–130 (HRRHH). The next 3 membrane-spanning stretches (helical) occupy residues 164 to 184 (LISL…FNMS), 207 to 227 (WIQV…LYRI), and 234 to 254 (FWVM…LVLI). The short motif at 300-304 (HVVHH) is the Histidine box-3 element.

Belongs to the fatty acid desaturase type 1 family.

It localises to the membrane. The protein operates within lipid metabolism; polyunsaturated fatty acid biosynthesis. Delta(12)-fatty acid desaturase producing in a heterologous system linoleic acid (18:2(9Z,12Z)) and to a lower extent hexadecadienoic acid (16:2(9Z,12Z)). This is Delta(12)-oleate desaturase from Trichosanthes kirilowii (Chinese snake gourd).